We begin with the raw amino-acid sequence, 632 residues long: tRNA uridine 5-carboxymethylaminomethyl modification enzyme MnmG (632 aa).

15 to 20 (GAGHAG) is a binding site for FAD. The interval 205–231 (PRVDGNTIDYSKTQEEPGDKEPRHFSY) is disordered. Residues 216–228 (KTQEEPGDKEPRH) show a composition bias toward basic and acidic residues. Position 276-290 (276-290 (GPRYCPSIEDKVVRF)) interacts with NAD(+).

Belongs to the MnmG family. As to quaternary structure, homodimer. Heterotetramer of two MnmE and two MnmG subunits. It depends on FAD as a cofactor.

The protein resides in the cytoplasm. NAD-binding protein involved in the addition of a carboxymethylaminomethyl (cmnm) group at the wobble position (U34) of certain tRNAs, forming tRNA-cmnm(5)s(2)U34. The polypeptide is tRNA uridine 5-carboxymethylaminomethyl modification enzyme MnmG (Lactobacillus johnsonii (strain CNCM I-12250 / La1 / NCC 533)).